We begin with the raw amino-acid sequence, 207 residues long: Claudin-11 (207 aa).

Met1 is a topological domain (cytoplasmic). Residues 2–22 traverse the membrane as a helical segment; it reads VATCLQVVGFVTSFVGWIGII. Over 23–82 the chain is Extracellular; it reads VTTSTNDWVVTCSYTIPTCRKMDELGSKGLWADCVMATGLYHCKPLVDILILPGYVQACR. A helical transmembrane segment spans residues 83–103; the sequence is ALMIAASVLGLPAILLLLTVL. Residues 104 to 122 are Cytoplasmic-facing; it reads PCIRMGHEPGVAKYRRAQL. A helical transmembrane segment spans residues 123–143; it reads AGVLLILLALCAIVATIWFPV. The Extracellular portion of the chain corresponds to 144–157; it reads CAHREITIVSFGYS. A helical transmembrane segment spans residues 158-178; sequence LYAGWIGAVMCLVGGCVIVCC. At 179–207 the chain is on the cytoplasmic side; sequence SGDAQSFGENRFYYSSGSSSPTHAKSAHV. Residues Ser193, Ser194, Ser197, and Ser198 each carry the phosphoserine modification.

It belongs to the claudin family. In terms of assembly, interacts with tetraspanin-3/TSPAN3. Interacts with OCLN.

Its subcellular location is the cell junction. The protein localises to the tight junction. The protein resides in the cell membrane. Plays a major role in tight junction-specific obliteration of the intercellular space, through calcium-independent cell-adhesion activity. The sequence is that of Claudin-11 (Cldn11) from Mus musculus (Mouse).